Consider the following 454-residue polypeptide: Bifunctional protein GlmU (454 aa).

The tract at residues 1-226 (MALNVVILAA…AIEVEGANNR (226 aa)) is pyrophosphorylase. UDP-N-acetyl-alpha-D-glucosamine is bound by residues 8 to 11 (LAAG), Lys-22, Gln-73, 78 to 79 (GT), 100 to 102 (YGD), Gly-137, Glu-151, Asn-166, and Asn-224. Residue Asp-102 coordinates Mg(2+). Asn-224 is a binding site for Mg(2+). The linker stretch occupies residues 227 to 247 (VQLAQLERAYQARAAEKLMLE). The segment at 248 to 454 (GANLRDPARI…GWPRPVKLKK (207 aa)) is N-acetyltransferase. UDP-N-acetyl-alpha-D-glucosamine contacts are provided by Arg-330 and Lys-348. His-360 (proton acceptor) is an active-site residue. UDP-N-acetyl-alpha-D-glucosamine is bound by residues Tyr-363 and Asn-374. Acetyl-CoA-binding positions include Ala-377, 383 to 384 (NY), Ser-402, Ala-420, and Arg-437.

In the N-terminal section; belongs to the N-acetylglucosamine-1-phosphate uridyltransferase family. This sequence in the C-terminal section; belongs to the transferase hexapeptide repeat family. In terms of assembly, homotrimer. The cofactor is Mg(2+).

The protein resides in the cytoplasm. The enzyme catalyses alpha-D-glucosamine 1-phosphate + acetyl-CoA = N-acetyl-alpha-D-glucosamine 1-phosphate + CoA + H(+). It carries out the reaction N-acetyl-alpha-D-glucosamine 1-phosphate + UTP + H(+) = UDP-N-acetyl-alpha-D-glucosamine + diphosphate. It participates in nucleotide-sugar biosynthesis; UDP-N-acetyl-alpha-D-glucosamine biosynthesis; N-acetyl-alpha-D-glucosamine 1-phosphate from alpha-D-glucosamine 6-phosphate (route II): step 2/2. It functions in the pathway nucleotide-sugar biosynthesis; UDP-N-acetyl-alpha-D-glucosamine biosynthesis; UDP-N-acetyl-alpha-D-glucosamine from N-acetyl-alpha-D-glucosamine 1-phosphate: step 1/1. Its pathway is bacterial outer membrane biogenesis; LPS lipid A biosynthesis. Its function is as follows. Catalyzes the last two sequential reactions in the de novo biosynthetic pathway for UDP-N-acetylglucosamine (UDP-GlcNAc). The C-terminal domain catalyzes the transfer of acetyl group from acetyl coenzyme A to glucosamine-1-phosphate (GlcN-1-P) to produce N-acetylglucosamine-1-phosphate (GlcNAc-1-P), which is converted into UDP-GlcNAc by the transfer of uridine 5-monophosphate (from uridine 5-triphosphate), a reaction catalyzed by the N-terminal domain. The sequence is that of Bifunctional protein GlmU from Shewanella woodyi (strain ATCC 51908 / MS32).